We begin with the raw amino-acid sequence, 178 residues long: Gamma-crystallin S (178 aa).

Residue serine 2 is modified to N-acetylserine. An N-terminal arm region spans residues 2–5 (SKTG). 2 Beta/gamma crystallin 'Greek key' domains span residues 6–44 (AKISFYEDRNFQGRRYDCDCDCVDFRSYLSRCNSIRVEG) and 45–87 (GTWA…RAVH). Residues 88–93 (LSSGGQ) are connecting peptide. 2 Beta/gamma crystallin 'Greek key' domains span residues 94–134 (YKIQ…KVLE) and 135–177 (GTWI…RRIV).

This sequence belongs to the beta/gamma-crystallin family. Monomer.

Crystallins are the dominant structural components of the vertebrate eye lens. In Rattus norvegicus (Rat), this protein is Gamma-crystallin S (Crygs).